An 862-amino-acid chain; its full sequence is Leucine--tRNA ligase (862 aa).

A 'HIGH' region motif is present at residues 51–61 (PYPSGSLHMGH). The short motif at 624-628 (KMSKS) is the 'KMSKS' region element. Lys627 is a binding site for ATP.

The protein belongs to the class-I aminoacyl-tRNA synthetase family.

The protein resides in the cytoplasm. It carries out the reaction tRNA(Leu) + L-leucine + ATP = L-leucyl-tRNA(Leu) + AMP + diphosphate. This chain is Leucine--tRNA ligase, found in Prochlorococcus marinus (strain NATL2A).